The primary structure comprises 303 residues: Fe-S cluster assembly protein DRE2 (303 aa).

Residues 1–125 (MTHSRTALVL…WQKRAVTASA (125 aa)) are N-terminal SAM-like domain. The interval 126–188 (PVKLAPRQPV…GDAPIAENDL (63 aa)) is linker. Residues Cys-202, Cys-213, Cys-216, and Cys-218 each contribute to the [2Fe-2S] cluster site. The interval 202-218 (CGRTQTRRRKACKDCTC) is fe-S binding site A. The [4Fe-4S] cluster site is built by Cys-266, Cys-269, Cys-277, and Cys-280. Short sequence motifs (cx2C motif) lie at residues 266 to 269 (CGSC) and 277 to 280 (CSGC). A fe-S binding site B region spans residues 266-280 (CGSCSLGDAFRCSGC).

This sequence belongs to the anamorsin family. In terms of assembly, monomer. Interacts with TAH18. Interacts with MIA40. The cofactor is [2Fe-2S] cluster. It depends on [4Fe-4S] cluster as a cofactor.

It localises to the cytoplasm. The protein resides in the mitochondrion intermembrane space. Functionally, component of the cytosolic iron-sulfur (Fe-S) protein assembly (CIA) machinery required for the maturation of extramitochondrial Fe-S proteins. Part of an electron transfer chain functioning in an early step of cytosolic Fe-S biogenesis, facilitating the de novo assembly of a [4Fe-4S] cluster on the scaffold complex CFD1-NBP35. Electrons are transferred to DRE2 from NADPH via the FAD- and FMN-containing protein TAH18. TAH18-DRE2 are also required for the assembly of the diferric tyrosyl radical cofactor of ribonucleotide reductase (RNR), probably by providing electrons for reduction during radical cofactor maturation in the catalytic small subunit RNR2. This is Fe-S cluster assembly protein DRE2 from Eremothecium gossypii (strain ATCC 10895 / CBS 109.51 / FGSC 9923 / NRRL Y-1056) (Yeast).